We begin with the raw amino-acid sequence, 338 residues long: Histone acetyltransferase SAS2 (338 aa).

Residues 1–15 are compositionally biased toward polar residues; it reads MARSLSQSLTATTQK. The segment at 1-31 is disordered; that stretch reads MARSLSQSLTATTQKLKGKKNGGKGKNKPSA. Positions 16–31 are enriched in basic residues; it reads LKGKKNGGKGKNKPSA. The 294-residue stretch at 45 to 338 folds into the MYST-type HAT domain; the sequence is LNERNIRQIQ…LKDEYLLIDD (294 aa). Residues 100–126 form a C2HC MYST-type zinc finger; that stretch reads LFVCEYCFKYTDDQTRFVGHVASCPFQ. An N6-acetyllysine; by autocatalysis modification is found at K168. Residues 209 to 211 and 216 to 222 each bind acetyl-CoA; these read ILI and QRRGLGL. The Proton donor/acceptor role is filled by E242. Acetyl-CoA-binding residues include S246 and K323.

It belongs to the MYST (SAS/MOZ) family. Interacts with CAC1. Component of the SAS complex, at least composed of SAS2, SAS4 and SAS5. These three proteins constitute the core of the complex and are sufficient to acetylate histones. SAS4 is essential for HAT activity of the complex, while SAS5 is required for maxiaml HAT activity. Post-translationally, autoacetylation at Lys-168 is required for proper function.

The protein resides in the cytoplasm. It is found in the nucleus. It catalyses the reaction L-lysyl-[protein] + acetyl-CoA = N(6)-acetyl-L-lysyl-[protein] + CoA + H(+). In terms of biological role, histone acetyltransferase (HAT) subunit of the SAS complex, a multiprotein complex that acetylates 'Lys-16' of histone H4 and 'Lys-14' of histone H3. The SAS complex is however unable to acetylate nucleosomal histones. The complex is involved in transcriptional silencing at telomeres and at HML locus. Also involved in rDNA silencing and G0 control. This Saccharomyces cerevisiae (strain ATCC 204508 / S288c) (Baker's yeast) protein is Histone acetyltransferase SAS2 (SAS2).